The chain runs to 236 residues: 2-C-methyl-D-erythritol 4-phosphate cytidylyltransferase (236 aa).

This sequence belongs to the IspD/TarI cytidylyltransferase family. IspD subfamily.

It catalyses the reaction 2-C-methyl-D-erythritol 4-phosphate + CTP + H(+) = 4-CDP-2-C-methyl-D-erythritol + diphosphate. The protein operates within isoprenoid biosynthesis; isopentenyl diphosphate biosynthesis via DXP pathway; isopentenyl diphosphate from 1-deoxy-D-xylulose 5-phosphate: step 2/6. Catalyzes the formation of 4-diphosphocytidyl-2-C-methyl-D-erythritol from CTP and 2-C-methyl-D-erythritol 4-phosphate (MEP). In Burkholderia pseudomallei (strain 1106a), this protein is 2-C-methyl-D-erythritol 4-phosphate cytidylyltransferase.